A 214-amino-acid chain; its full sequence is Chaperone protein TorD (214 aa).

The protein belongs to the TorD/DmsD family. TorD subfamily.

Its subcellular location is the cytoplasm. Its function is as follows. Involved in the biogenesis of TorA. Acts on TorA before the insertion of the molybdenum cofactor and, as a result, probably favors a conformation of the apoenzyme that is competent for acquiring the cofactor. In Aeromonas salmonicida (strain A449), this protein is Chaperone protein TorD.